A 262-amino-acid chain; its full sequence is Proliferating cell nuclear antigen (262 aa).

Residues 61–80 (RCDRNIAMGVNLNSMSKILK) mediate DNA binding. Residue Lys-164 forms a Glycyl lysine isopeptide (Lys-Gly) (interchain with G-Cter in ubiquitin) linkage.

It belongs to the PCNA family. In terms of assembly, homotrimer. Forms a complex with activator 1 heteropentamer in the presence of ATP. Component of the replisome complex. Post-translationally, monoubiquitinated by the UBE2B-RAD18 complex on Lys-164. Monoubiquitination at Lys-164 also takes place in undamaged proliferating cells, and is mediated by the DCX(DTL) complex, leading to enhance PCNA-dependent translesion DNA synthesis.

It is found in the nucleus. In terms of biological role, this protein is an auxiliary protein of DNA polymerase delta and is involved in the control of eukaryotic DNA replication by increasing the polymerase's processibility during elongation of the leading strand. The chain is Proliferating cell nuclear antigen (PCNA) from Coturnix japonica (Japanese quail).